Reading from the N-terminus, the 463-residue chain is SCF E3 ubiquitin ligase complex F-box protein pof2 (463 aa).

The F-box domain maps to 1-42 (MRVPNEVCFNILSYLEADELRCKSTVCTSWRNFIIPTLWEKV). 10 LRR repeats span residues 145–170 (CPNLKALNIGNCGLVEDTGMVQIIKR), 171–196 (CPYLNRLIIPNCRKLTDVSLQILSEK), 198–220 (DLIELDISGCEGFHNADTLSRLV), 225–247 (GLKELSMDGCTELSHFITFLNLN), 249–271 (ELDAMRALSLNNLPDLKDSDIEL), 278–299 (KLNSLFLSKCIGLTDSSLLSLT), 304–326 (SLTTLHLGHCYEITDIGVQCLLK), 328–353 (CKNITYIDFGGCLRLSDIAVSAIAKL), 354–378 (PYLQRVGLVKCICLTDLSVILLSGS), and 380–405 (SRNLERVHLSYCIGLTAKSVSYLMYN).

Part of a SCF E3 ubiquitin ligase complex. Interacts with skp1.

The protein resides in the mitochondrion. In terms of biological role, involved in substrate recognition in ubiquitin-dependent degradation. This chain is SCF E3 ubiquitin ligase complex F-box protein pof2 (pof2), found in Schizosaccharomyces pombe (strain 972 / ATCC 24843) (Fission yeast).